We begin with the raw amino-acid sequence, 707 residues long: Ornithine decarboxylase (707 aa).

The interval 83-102 (NRNPLSRADSAAGREETAQT) is disordered. The residue at position 288 (Lys288) is an N6-(pyridoxal phosphate)lysine. Residues Ser421, Gly458, and 498 to 501 (EPGR) contribute to the pyridoxal 5'-phosphate site. Residue 561-562 (FD) participates in substrate binding. Cys634 serves as the catalytic Proton donor; shared with dimeric partner. A substrate-binding site is contributed by Asp635. A pyridoxal 5'-phosphate-binding site is contributed by Tyr663.

The protein belongs to the Orn/Lys/Arg decarboxylase class-II family. As to quaternary structure, homodimer. Only the dimer is catalytically active, as the active sites are constructed of residues from both monomers. The cofactor is pyridoxal 5'-phosphate.

It carries out the reaction L-ornithine + H(+) = putrescine + CO2. Its pathway is amine and polyamine biosynthesis; putrescine biosynthesis via L-ornithine pathway; putrescine from L-ornithine: step 1/1. Inhibited by antizyme (AZ) in response to polyamine levels. AZ inhibits the assembly of the functional homodimer by binding to ODC monomers and targeting them for ubiquitin-independent proteolytic destruction by the 26S proteasome. Inhibited by 1-amino-oxy-3-aminopropane (APA, an isosteric analog of putrescine). Irreversibly inhibited by alpha-difluoromethylornithine (DFMO, a curative agent of West African sleeping sickness). In terms of biological role, catalyzes the first and rate-limiting step of polyamine biosynthesis that converts ornithine into putrescine, which is the precursor for the polyamines, spermidine and spermine. Polyamines are essential for cell proliferation and are implicated in cellular processes, ranging from DNA replication to apoptosis. The sequence is that of Ornithine decarboxylase from Leishmania donovani.